A 281-amino-acid polypeptide reads, in one-letter code: Leukocyte antigen CD37 (281 aa).

The Cytoplasmic segment spans residues 1–17 (MSAQESCLSLIKYFLFV). Residues 18 to 38 (FNLFFFVLGGLIFCFGTWILI) form a helical membrane-spanning segment. Residues 39–59 (DKTSFVSFVGLSFVPLQTWSK) are Extracellular-facing. Residues 60–74 (VLSVSGVLTMALALL) traverse the membrane as a helical segment. Residues 75–85 (GCVGALKELRC) lie on the Cytoplasmic side of the membrane. Residues 86–111 (LLGLYFGMLLLLFATQITLGILISTQ) traverse the membrane as a helical segment. The Extracellular segment spans residues 112–241 (RVRLERRVQE…RSLQKWLHNN (130 aa)). Residues asparagine 170, asparagine 183, and asparagine 188 are each glycosylated (N-linked (GlcNAc...) asparagine). Residues 242 to 266 (IISIVGICLGVGLLELGFMTLSIFL) traverse the membrane as a helical segment. Residues 267-281 (CRNLDHVYDRLARYR) lie on the Cytoplasmic side of the membrane.

The protein belongs to the tetraspanin (TM4SF) family. As to quaternary structure, interacts with SCIMP. Interacts with SOCS3. Interacts with DECTIN1/CLEC7A. In terms of processing, tyrosine phosphorylated; leading to activation of downstream signaling pathways. B-lymphocytes.

The protein localises to the cell membrane. In terms of biological role, structural component of specialized membrane microdomains known as tetraspanin-enriched microdomains (TERMs), which act as platforms for receptor clustering and signaling. Participates thereby in diverse biological functions such as cell signal transduction, adhesion, migration and protein trafficking. Upon ligand binding, two signaling pathways are activated, one acting through phosphorylation by LYN leading to cell death or a survival pathway with activation of GSK3B. Plays an essential role essential for clustering of integrin ITGA4/ITGB1 and promotes its mobility in the plasma membrane of B-cells. In turn, participates in ITGA4/ITGB1 integrin-mediated antiapoptotic signaling through AKT. Plays also a role in the migration of dendritic cells and neutrophils to draining lymph nodes, as well as in their integrin-mediated adhesion. Negatively regulates IL-6 responses through direct interaction with SOCS3 thereby preventing constitutive IL-6 signaling. Alternatively, inhibition of IL-6 signaling can also occur via interaction and stabilization of DECTIN1/CLEC7A at the cell membrane to inhibit its ability to promote the production of IL-6. This chain is Leukocyte antigen CD37 (Cd37), found in Rattus norvegicus (Rat).